Here is a 417-residue protein sequence, read N- to C-terminus: Phosphoglycerate kinase 1 (417 aa).

At serine 2 the chain carries N-acetylserine. Serine 2 and serine 4 each carry phosphoserine. Lysine 6 carries the post-translational modification N6-succinyllysine. Lysine 11 is subject to N6-acetyllysine. (2R)-3-phosphoglycerate is bound by residues valine 23, aspartate 24, phenylalanine 25, asparagine 26, glutamine 38, and arginine 39. The mitochondrial targeting region exposed following cis-trans isomerization by PIN1 and recognized by the TOM complex for mitochondrial translocation of the protein stretch occupies residues 38–43 (QRIKAA). Lysine 48 is modified (N6-acetyllysine; alternate). Residue lysine 48 is modified to N6-succinyllysine; alternate. (2R)-3-phosphoglycerate is bound by residues serine 62, histidine 63, glycine 65, and arginine 66. Position 75 is an N6-acetyllysine (lysine 75). A Phosphotyrosine modification is found at tyrosine 76. N6-acetyllysine is present on residues lysine 86 and lysine 91. Position 97 is an N6-acetyllysine; alternate (lysine 97). Position 97 is an N6-(2-hydroxyisobutyryl)lysine; alternate (lysine 97). The (2R)-3-phosphoglycerate site is built by leucine 122 and arginine 123. Lysine 131 is subject to N6-acetyllysine; alternate. Lysine 131 is modified (N6-malonyllysine; alternate). Lysine 146 is modified (N6-acetyllysine). The (2R)-3-phosphoglycerate site is built by histidine 170 and arginine 171. Lysine 191 carries the post-translational modification N6-succinyllysine. Tyrosine 196 bears the Phosphotyrosine mark. Lysine 199 is modified (N6-acetyllysine). Serine 203 carries the post-translational modification Phosphoserine. Glycine 214 provides a ligand contact to ADP. Glycine 214 contributes to the CDP binding site. Residues alanine 215 and lysine 216 each coordinate AMP. Residue alanine 215 coordinates ATP. Alanine 215 provides a ligand contact to Mg(2+). Lysine 216 is subject to N6-(2-hydroxyisobutyryl)lysine. The Mg(2+) site is built by alanine 218 and aspartate 219. A CDP-binding site is contributed by aspartate 219. An AMP-binding site is contributed by lysine 220. Residue lysine 220 coordinates ATP. At lysine 220 the chain carries N6-(2-hydroxyisobutyryl)lysine. An ADP-binding site is contributed by glycine 238. A CDP-binding site is contributed by glycine 238. Residue glycine 239 coordinates AMP. Glycine 239 is an ATP binding site. Lysine 267 and lysine 291 each carry N6-acetyllysine. Glycine 313 provides a ligand contact to AMP. Glycine 313 lines the ATP pocket. Lysine 323 carries the N6-(2-hydroxyisobutyryl)lysine modification. 3 residues coordinate CDP: glycine 338, valine 340, and phenylalanine 343. Residue phenylalanine 343 participates in ADP binding. Glutamate 344 contributes to the AMP binding site. Glutamate 344 is a binding site for ATP. N6-acetyllysine is present on lysine 361. Aspartate 375 and threonine 376 together coordinate ATP. Mg(2+) is bound at residue aspartate 375.

This sequence belongs to the phosphoglycerate kinase family. Monomer. Interacts with kinase MAPK1/ERK2; the interaction is direct, occurs under hypoxic conditions, and promotes its interaction with PIN1. Interacts with peptidyl-prolyl cis-trans isomerase PIN1; the interaction is direct, occurs under hypoxic conditions, and targets the protein to the mitochondrion by promoting interactions with the TOM complex. Interacts with mitochondrial circRNA mcPGK1 (via its 2nd stem-loop); the interaction is direct and targets the protein to the mitochondrion by promoting interactions with the TOM complex. Interacts with pyruvate dehydrogenase kinase PDK1; the interaction is direct, occurs under hypoxic conditions and leads to PDK1-mediated inhibition of pyruvate dehydrogenase complex activity. It depends on Mg(2+) as a cofactor. Post-translationally, phosphorylated at Ser-203 by MAPK1/ERK2 under hypoxic conditions, which promotes its mitochondrial targeting. Testis, lung, brain, skeletal muscle, liver, intestine, and kidney (at protein level).

The protein resides in the cytoplasm. It is found in the cytosol. The protein localises to the mitochondrion matrix. The enzyme catalyses (2R)-3-phosphoglycerate + ATP = (2R)-3-phospho-glyceroyl phosphate + ADP. It carries out the reaction L-seryl-[protein] + ATP = O-phospho-L-seryl-[protein] + ADP + H(+). The protein operates within carbohydrate degradation; glycolysis; pyruvate from D-glyceraldehyde 3-phosphate: step 2/5. Functionally, catalyzes one of the two ATP producing reactions in the glycolytic pathway via the reversible conversion of 1,3-diphosphoglycerate to 3-phosphoglycerate. Both L- and D- forms of purine and pyrimidine nucleotides can be used as substrates, but the activity is much lower on pyrimidines. In addition to its role as a glycolytic enzyme, it seems that PGK-1 acts as a polymerase alpha cofactor protein (primer recognition protein). Acts as a protein kinase when localized to the mitochondrion where it phosphorylates pyruvate dehydrogenase kinase PDK1 to inhibit pyruvate dehydrogenase complex activity and suppress the formation of acetyl-coenzyme A from pyruvate, and consequently inhibit oxidative phosphorylation and promote glycolysis. May play a role in sperm motility. This chain is Phosphoglycerate kinase 1 (Pgk1), found in Mus musculus (Mouse).